A 370-amino-acid polypeptide reads, in one-letter code: ECF RNA polymerase sigma factor SigG (370 aa).

The sigma-70 factor domain-2 stretch occupies residues 63–129 (EPYRRELLAH…LTALEGRRRR (67 aa)). A Polymerase core binding motif is present at residues 85 to 88 (DLVQ). The interval 180–232 (LAFVAALQHLSPRQRAVLLLRDVLQWKSAEVADAIGTSTVAVNSLLQRARSQL) is sigma-70 factor domain-4. Residues 207 to 226 (SAEVADAIGTSTVAVNSLLQ) constitute a DNA-binding region (H-T-H motif).

The protein belongs to the sigma-70 factor family. ECF subfamily. Interacts transiently with the RNA polymerase catalytic core formed by RpoA, RpoB, RpoC and RpoZ (2 alpha, 1 beta, 1 beta' and 1 omega subunit) to form the RNA polymerase holoenzyme that can initiate transcription.

Functionally, sigma factors are initiation factors that promote the attachment of RNA polymerase to specific initiation sites and are then released. Extracytoplasmic function (ECF) sigma factors are held in an inactive form by a cognate anti-sigma factor until released, although no anti-sigma factor is known for this protein. May be involved in host intracellular survival after infection (strains H37Rv and CDC 1551). A role in the SOS response is controversial; it has been seen in strain CDC 1551 but not in H37Rv. This chain is ECF RNA polymerase sigma factor SigG (sigG), found in Mycobacterium tuberculosis (strain CDC 1551 / Oshkosh).